A 474-amino-acid polypeptide reads, in one-letter code: Crocetin glucosyltransferase, chloroplastic (474 aa).

A chloroplast-targeting transit peptide spans 1–45; the sequence is MVQQRHVLLITYPAQGHINPALQFAQRLLRMGIQVTLATSVYALS. Histidine 17 functions as the Proton acceptor in the catalytic mechanism. Histidine 17 serves as a coordination point for an anthocyanidin. Residues glutamine 346, histidine 361, tryptophan 364, asparagine 365, serine 366, glutamate 369, aspartate 385, and glutamine 386 each contribute to the UDP-alpha-D-glucose site.

This sequence belongs to the UDP-glycosyltransferase family. As to expression, ubiquitous.

Its subcellular location is the plastid. It is found in the chloroplast. It carries out the reaction crocetin + UDP-alpha-D-glucose = beta-D-glucosyl crocetin + UDP. The catalysed reaction is beta-D-glucosyl crocetin + UDP-alpha-D-glucose = bis(beta-D-glucosyl) crocetin + UDP. The enzyme catalyses beta-D-gentiobiosyl crocetin + UDP-alpha-D-glucose = beta-D-gentiobiosyl beta-D-glucosyl crocetin + UDP. Glucosyltransferase acting on a broad range of substrates, including crocetin, 4-coumaric acid, caffeic acid and ferulic acid. No activity with indol-3-acetic acid, bixin and norbixin, and no formation of O-glucosides. Involved with UGT94E5 in sequential glycosylation of crocetin to crocin (bis(beta-D-gentiobiosyl) crocetin). The protein is Crocetin glucosyltransferase, chloroplastic (UGT75L6) of Gardenia jasminoides (Cape jasmine).